A 615-amino-acid chain; its full sequence is MPKLRSATSTEGRNMAGARALWRATGVKDNDFGKPIIAIANSFTQFVPGHVHLKDMGSLVAGAIEEAGGIAKEFNTIAVDDGIAMGHGGMLYSLPSRELIADSVEYMVNAHCADALVCISNCDKITPGMLMASLRLNIPVIFVSGGPMEAGKTKLSDQLIKLDLVDAMVAGADSRVSDADSEQIERSACPTCGSCSGMFTANSMNCLTEALGLSLPGNGSMLATHADRRELFLEAGRRIMDLATRYYQHDDESALPRNIANFKAFENAMTLDIAMGGSSNTVLHLLASAQEGEVDFTMDDIDRLSRLVPHLCKVAPSTPKYHMEDVHRAGGVMGILGELDRANLLHNDVYHVAGSNLADVLARFDIVQTDDAAVHKFFSAGPAGIPTTKAFSQDCRWDSVDNDRKEGCIRSREFAFSQEGGLAVLSGNVALDGCIVKTAGVEVENHTFIGSARVFESQDDAVAGILGGEVVAGDVVVIRYEGPKGGPGMQEMLYPTSYLKSRGLGTKCALITDGRFSGGTSGLSIGHVSPEAAAGGTIGLVQTGDRIEIDIPARSIKLAISDIELAARRTAMEALGKDAWKPLGRVRQVSMALKAYALLATSADKGAVRDTSKLV.

D81 contributes to the Mg(2+) binding site. C122 is a [2Fe-2S] cluster binding site. Mg(2+) is bound by residues D123 and K124. K124 is modified (N6-carboxylysine). C195 serves as a coordination point for [2Fe-2S] cluster. Residue E491 participates in Mg(2+) binding. S517 serves as the catalytic Proton acceptor.

It belongs to the IlvD/Edd family. Homodimer. [2Fe-2S] cluster serves as cofactor. Requires Mg(2+) as cofactor.

The catalysed reaction is (2R)-2,3-dihydroxy-3-methylbutanoate = 3-methyl-2-oxobutanoate + H2O. It carries out the reaction (2R,3R)-2,3-dihydroxy-3-methylpentanoate = (S)-3-methyl-2-oxopentanoate + H2O. The protein operates within amino-acid biosynthesis; L-isoleucine biosynthesis; L-isoleucine from 2-oxobutanoate: step 3/4. Its pathway is amino-acid biosynthesis; L-valine biosynthesis; L-valine from pyruvate: step 3/4. In terms of biological role, functions in the biosynthesis of branched-chain amino acids. Catalyzes the dehydration of (2R,3R)-2,3-dihydroxy-3-methylpentanoate (2,3-dihydroxy-3-methylvalerate) into 2-oxo-3-methylpentanoate (2-oxo-3-methylvalerate) and of (2R)-2,3-dihydroxy-3-methylbutanoate (2,3-dihydroxyisovalerate) into 2-oxo-3-methylbutanoate (2-oxoisovalerate), the penultimate precursor to L-isoleucine and L-valine, respectively. This chain is Dihydroxy-acid dehydratase, found in Shewanella halifaxensis (strain HAW-EB4).